Reading from the N-terminus, the 214-residue chain is Riboflavin kinase (214 aa).

Positions 1–91 (MRSIMEVETL…YCSIFEDGGA (91 aa)) are H-T-H motif-like. Residues 92–214 (PVMRGKVVTG…DGDEVEVTLE (123 aa)) are riboflavin kinase. Residue 101-106 (GLGEGQ) participates in CDP binding. Thr-130 and Asn-132 together coordinate Mg(2+). Residues Thr-182 and Glu-190 each coordinate FMN. CDP is bound at residue 195–198 (IKLR).

The protein belongs to the archaeal riboflavin kinase family. Mg(2+) serves as cofactor.

It catalyses the reaction riboflavin + CTP = CDP + FMN + H(+). It functions in the pathway cofactor biosynthesis; FMN biosynthesis; FMN from riboflavin (CTP route): step 1/1. Its function is as follows. Catalyzes the CTP-dependent phosphorylation of riboflavin (vitamin B2) to form flavin mononucleotide (FMN). The chain is Riboflavin kinase (ribK) from Methanocella arvoryzae (strain DSM 22066 / NBRC 105507 / MRE50).